A 172-amino-acid polypeptide reads, in one-letter code: MSAQVSLELHHRISQFLFHEASLLDDWKFRDWLAQLDEEICYTMRTTVNAQTRDRRKGVQPPTTWIFNDTKDQLERRIARLETGMAWAEEPPSRTRHLISNCQISETDIPNVFAVRVNYLLYRAQKERDETFYVGTRFDKVRRLEDDNWRLLERDIVLDQAVITSHNLSVLF.

This sequence belongs to the bacterial ring-hydroxylating dioxygenase beta subunit family. In terms of assembly, this dioxygenase system consists of four proteins: the two subunits of the hydroxylase component (HcaE and HcaF), a ferredoxin (HcaC) and a ferredoxin reductase (HcaD).

The catalysed reaction is 3-phenylpropanoate + NADH + O2 + H(+) = 3-(cis-5,6-dihydroxycyclohexa-1,3-dien-1-yl)propanoate + NAD(+). It catalyses the reaction (E)-cinnamate + NADH + O2 + H(+) = (2E)-3-(cis-5,6-dihydroxycyclohexa-1,3-dien-1-yl)prop-2-enoate + NAD(+). The protein operates within aromatic compound metabolism; 3-phenylpropanoate degradation. Its function is as follows. Part of the multicomponent 3-phenylpropionate dioxygenase. Converts 3-phenylpropionic acid (PP) and cinnamic acid (CI) into 3-phenylpropionate-dihydrodiol (PP-dihydrodiol) and cinnamic acid-dihydrodiol (CI-dihydrodiol), respectively. The chain is 3-phenylpropionate/cinnamic acid dioxygenase subunit beta from Escherichia coli O157:H7.